Reading from the N-terminus, the 148-residue chain is Probable transcriptional regulator SyrB (148 aa).

The disordered stretch occupies residues 1-58 (MADESNTGPVAAAEAVAETQAPAGKRKSSSRRQRTAAGQVAESKTTAKPKRYSETERA). Residues 7-23 (TGPVAAAEAVAETQAPA) are compositionally biased toward low complexity. Positions 24–34 (GKRKSSSRRQR) are enriched in basic residues.

It belongs to the SyrB family.

In terms of biological role, responsible for the repression of SyrM activity. The polypeptide is Probable transcriptional regulator SyrB (syrB) (Sinorhizobium fredii (strain NBRC 101917 / NGR234)).